A 1067-amino-acid chain; its full sequence is Receptor-type guanylate cyclase gcy-10 (1067 aa).

The N-terminal stretch at 1 to 20 is a signal peptide; the sequence is MLKSLLIIVIVFLHRELCDG. At 21–438 the chain is on the extracellular side; the sequence is IQLILFDNWP…CVAKSSCVNY (418 aa). Asparagine 411 carries an N-linked (GlcNAc...) asparagine glycan. Residues 439-459 form a helical membrane-spanning segment; the sequence is IPHIIAAVVIVTIIVIAIVII. Topologically, residues 460-1067 are cytoplasmic; it reads VKQRRHKLNI…RGSIVPLQKA (608 aa). The Protein kinase domain occupies 509 to 791; that stretch reads ALTSRRRVFG…ESISTVYPLS (283 aa). Residues 515-523 and lysine 534 contribute to the ATP site; that span reads RVFGSYALV. The region spanning 859–989 is the Guanylate cyclase domain; that stretch reads TVMFVQICDF…DTVNFASRMQ (131 aa).

This sequence belongs to the adenylyl cyclase class-4/guanylyl cyclase family. Expressed predominantly in AWC but also in AWB, ASI, ASJ and ASK sensory neurons and in I1 interneuron.

The protein resides in the cell membrane. It localises to the cell projection. Its subcellular location is the cilium. The enzyme catalyses GTP = 3',5'-cyclic GMP + diphosphate. Functionally, guanylate cyclase involved in the production of the second messenger cGMP. Regulates chemotaxis responses toward volatile odorants in AWC sensory neurons and their avoidance in AWB sensory neurons. May be involved in sensitivity to quinine by regulating egl-4 activity through the production of cGMP. Involved in phototransduction in ASJ neurons downstream of G protein coupled-photoreceptor lite-1. Required to maintain the expression of putative olfactory receptor str-2 in AWC neurons in adults. In AWB and AWC sensory neurons, mediates the recognition of food oders which subsequently allows for the detection of preferred food sources. Involved in AWB sensory neuron development and extension during postembryonic development, potentially via mediating localization of tub-1 and PI(4,5)P2 to membrane cilia. The protein is Receptor-type guanylate cyclase gcy-10 of Caenorhabditis elegans.